The following is a 160-amino-acid chain: Nucleotide-binding protein Bpet3698 (160 aa).

The protein belongs to the YajQ family.

Nucleotide-binding protein. The chain is Nucleotide-binding protein Bpet3698 from Bordetella petrii (strain ATCC BAA-461 / DSM 12804 / CCUG 43448).